The following is a 390-amino-acid chain: Endoglucanase gh5-1 (390 aa).

The first 16 residues, Met-1 to Ala-16, serve as a signal peptide directing secretion. Residues Gln-17–Gln-52 enclose the CBM1 domain. N-linked (GlcNAc...) asparagine glycosylation is found at Asn-157 and Asn-261.

It belongs to the glycosyl hydrolase 5 (cellulase A) family. In terms of processing, N-glycosylated.

The protein resides in the secreted. It carries out the reaction Endohydrolysis of (1-&gt;4)-beta-D-glucosidic linkages in cellulose, lichenin and cereal beta-D-glucans.. Endoglucanase that plays an important role in biomass degradation. Binds onto plant cell walls to participate in the hydrolysis of cellulose. The polypeptide is Endoglucanase gh5-1 (Neurospora crassa (strain ATCC 24698 / 74-OR23-1A / CBS 708.71 / DSM 1257 / FGSC 987)).